The following is a 167-amino-acid chain: Peptide deformylase (167 aa).

The Fe cation site is built by C91 and H133. E134 is an active-site residue. Position 137 (H137) interacts with Fe cation.

Belongs to the polypeptide deformylase family. Requires Fe(2+) as cofactor.

It carries out the reaction N-terminal N-formyl-L-methionyl-[peptide] + H2O = N-terminal L-methionyl-[peptide] + formate. In terms of biological role, removes the formyl group from the N-terminal Met of newly synthesized proteins. Requires at least a dipeptide for an efficient rate of reaction. N-terminal L-methionine is a prerequisite for activity but the enzyme has broad specificity at other positions. The chain is Peptide deformylase from Chromobacterium violaceum (strain ATCC 12472 / DSM 30191 / JCM 1249 / CCUG 213 / NBRC 12614 / NCIMB 9131 / NCTC 9757 / MK).